We begin with the raw amino-acid sequence, 74 residues long: Small ribosomal subunit protein bS18 (74 aa).

This sequence belongs to the bacterial ribosomal protein bS18 family. As to quaternary structure, part of the 30S ribosomal subunit. Forms a tight heterodimer with protein bS6.

Its function is as follows. Binds as a heterodimer with protein bS6 to the central domain of the 16S rRNA, where it helps stabilize the platform of the 30S subunit. The chain is Small ribosomal subunit protein bS18 from Zymomonas mobilis subsp. mobilis (strain ATCC 31821 / ZM4 / CP4).